We begin with the raw amino-acid sequence, 455 residues long: MSEEDKAKKLENLLKLLQLNNDDTSKFTQEQKKAMKDHKFWRTQPVKDFDEKVVEEGPIDKPKTPEDISDKPLPLLSSFEWCSIDVDNKKQLEDVFVLLNENYVEDRDAGFRFNYTKEFFNWALKSPGWKKDWHIGVRVKETQKLVAFISAIPVTLGVRGKQVPSVEINFLCVHKQLRSKRLTPVLIKEITRRVNKCDIWHALYTAGIVLPAPVSTCRYTHRPLNWKKLYEVDFTGLPDGHTEEDMIAENALPAKTKTAGLRKLKKEDIDQVFELFKRYQSRFELIQIFTKEEFEHNFIGEESLPLDKQVIFSYVVEQPDGKITDFFSFYSLPFTILNNTKYKDLGIGYLYYYATDADFQFKDRFDPKATKALKTRLCELIYDACILAKNANMDVFNALTSQDNTLFLDDLKFGPGDGFLNFYLFNYRAKPITGGLNPDNSNDIKRRSNVGVVML.

Residue 38-41 (HKFW) participates in tetradecanoyl-CoA binding. A myristoyl CoA-binding region spans residues 168 to 204 (INFLCVHKQLRSKRLTPVLIKEITRRVNKCDIWHALY). The active-site Proton acceptor; via carboxylate is leucine 455.

Belongs to the NMT family. As to quaternary structure, monomer. The N-terminus is blocked.

It localises to the cytoplasm. The catalysed reaction is N-terminal glycyl-[protein] + tetradecanoyl-CoA = N-tetradecanoylglycyl-[protein] + CoA + H(+). Inhibited by diethylpyrocarbonate. Competitively inhibited by S-(2-oxo)pentadecyl-CoA, a non hydrolysable myristoyl-CoA analog, and by SC-58272, a peptidomimetic derived from the N-terminal sequence of a natural substrate. Its function is as follows. Adds a myristoyl group to the N-terminal glycine residue of certain cellular proteins. Substrate specificity requires an N-terminal glycine in the nascent polypeptide substrates. Uncharged amino acids are preferred at position 2 while neutral residues are favored at positions 3 and 4. Ser is present at position 5 in almost all known N-myristoyl proteins and Lys is commonly encountered at postion 6. The chain is Glycylpeptide N-tetradecanoyltransferase (NMT1) from Saccharomyces cerevisiae (strain ATCC 204508 / S288c) (Baker's yeast).